Here is a 4451-residue protein sequence, read N- to C-terminus: Gramicidin S synthase 2 (4451 aa).

The domain 1 (proline-activating) stretch occupies residues 467–1044 (DKTIHQLFTE…IQEISNYING (578 aa)). Carrier domains lie at 971–1046 (VPTN…NGAK), 2006–2081 (APSS…ADGQ), 3052–3127 (RPRT…EETD), and 4090–4165 (APRN…THQE). Residues Ser-1006, Ser-2041, Ser-3087, and Ser-4125 each carry the O-(pantetheine 4'-phosphoryl)serine modification. The segment at 1521 to 2080 (DHVAVGWKDQ…SALAQYIADG (560 aa)) is domain 2 (valine-activating). The segment at 2538 to 3135 (YATNKIFHEL…TDTEQYMAIQ (598 aa)) is domain 3 (ornithine-activating). A domain 4 (leucine-activating) region spans residues 3591-4173 (IQELFEEQVK…QESENNVHQP (583 aa)).

Belongs to the ATP-dependent AMP-binding enzyme family. In terms of assembly, large multienzyme complex of GrsA and GrsB. Pantetheine 4'-phosphate serves as cofactor.

It functions in the pathway antibiotic biosynthesis; gramicidin S biosynthesis. Its function is as follows. This protein is a multifunctional enzyme, able to activate and polymerize the amino acids Pro, Val, Orn and Leu. Activation sites for these AA consist of individual domains. This is Gramicidin S synthase 2 (grsB) from Aneurinibacillus migulanus (Bacillus migulanus).